Reading from the N-terminus, the 89-residue chain is Small ribosomal subunit protein uS14 (89 aa).

Belongs to the universal ribosomal protein uS14 family. As to quaternary structure, part of the 30S ribosomal subunit. Contacts proteins S3 and S10.

Functionally, binds 16S rRNA, required for the assembly of 30S particles and may also be responsible for determining the conformation of the 16S rRNA at the A site. The protein is Small ribosomal subunit protein uS14 of Chlorobium phaeovibrioides (strain DSM 265 / 1930) (Prosthecochloris vibrioformis (strain DSM 265)).